Here is a 232-residue protein sequence, read N- to C-terminus: Golgi SNAP receptor complex member 1 (232 aa).

Residues 1–211 lie on the Cytoplasmic side of the membrane; sequence MGGSSYDVLR…QRINIKKRRD (211 aa). Coiled-coil stretches lie at residues 6 to 23 and 52 to 80; these read YDVLRKQARSLENEIDLK and GEHVFDSLSEEIEQMLEKLSSLNESMSDL. A helical; Anchor for type IV membrane protein transmembrane segment spans residues 212 to 232; the sequence is SLILGAVIGFCVILLLLYAFN.

Belongs to the GOSR1 family. As to quaternary structure, component of several multiprotein Golgi SNARE complexes.

It localises to the golgi apparatus membrane. In terms of biological role, involved in transport from the ER to the Golgi apparatus as well as in intra-Golgi transport. It belongs to a super-family of proteins called t-SNAREs or soluble NSF (N-ethylmaleimide-sensitive factor) attachment protein receptor. The sequence is that of Golgi SNAP receptor complex member 1 (Gos28) from Drosophila melanogaster (Fruit fly).